The sequence spans 955 residues: Calsyntenin-2 (955 aa).

Positions 1-20 are cleaved as a signal peptide; the sequence is MLPGRLCWVPLLLALGVGSG. The Extracellular portion of the chain corresponds to 21–831; it reads SGGGGDSRQR…SIQHSSVVPS (811 aa). 2 Cadherin domains span residues 44–160 and 161–280; these read IETS…APTF and KEPA…MPLF. Residues Asn56 and Asn98 are each glycosylated (N-linked (GlcNAc...) asparagine). 4 N-linked (GlcNAc...) asparagine glycosylation sites follow: Asn342, Asn374, Asn716, and Asn729. Residues 832-852 traverse the membrane as a helical segment; that stretch reads IATVVIIISVCMLVFVVAMGV. At 853–955 the chain is on the cytoplasmic side; sequence YRVRIAHQHF…LEWDDSTLPY (103 aa). A disordered region spans residues 887-955; it reads PMEKHEGPGH…LEWDDSTLPY (69 aa). A compositionally biased stretch (basic and acidic residues) spans 888–898; the sequence is MEKHEGPGHGE. 2 stretches are compositionally biased toward acidic residues: residues 899 to 913 and 920 to 929; these read DETE…EEEM and DDSEEEEEEE.

Belongs to the calsyntenin family. Post-translationally, proteolytically processed under normal cellular conditions. A primary zeta-cleavage generates a large extracellular (soluble) N-terminal domain (sAlc) and a short C-terminal transmembrane fragment (CTF1). A secondary cleavage catalyzed by gamma-secretase within the transmembrane domain releases the beta-Alc-gamma chain in the extracellular milieu and produces an intracellular fragment (AlcICD). This processing is strongly suppressed in the tripartite complex formed with APBA2 and APP, which seems to prevent the association with PSEN1. In terms of tissue distribution, restricted to the brain.

The protein localises to the postsynaptic cell membrane. Its subcellular location is the endoplasmic reticulum membrane. The protein resides in the golgi apparatus membrane. It is found in the cell projection. It localises to the dendrite. Functionally, postsynaptic adhesion molecule that binds to presynaptic neurexins to mediate synapse formation, and which is involved in learning and memory. Promotes synapse development by acting as a cell adhesion molecule at the postsynaptic membrane, which associates with neurexin-alpha at the presynaptic membrane. The chain is Calsyntenin-2 from Homo sapiens (Human).